The primary structure comprises 303 residues: Methionyl-tRNA formyltransferase (303 aa).

(6S)-5,6,7,8-tetrahydrofolate is bound at residue 110 to 113 (SLLP).

It belongs to the Fmt family.

The catalysed reaction is L-methionyl-tRNA(fMet) + (6R)-10-formyltetrahydrofolate = N-formyl-L-methionyl-tRNA(fMet) + (6S)-5,6,7,8-tetrahydrofolate + H(+). In terms of biological role, attaches a formyl group to the free amino group of methionyl-tRNA(fMet). The formyl group appears to play a dual role in the initiator identity of N-formylmethionyl-tRNA by promoting its recognition by IF2 and preventing the misappropriation of this tRNA by the elongation apparatus. This Ehrlichia ruminantium (strain Gardel) protein is Methionyl-tRNA formyltransferase.